A 608-amino-acid polypeptide reads, in one-letter code: Glutamine--fructose-6-phosphate aminotransferase [isomerizing] (608 aa).

The active-site Nucleophile; for GATase activity is C2. A Glutamine amidotransferase type-2 domain is found at 2-217 (CGIVGIVGNQ…DGDWAVIGKT (216 aa)). SIS domains are found at residues 281 to 422 (ISDA…ARGT) and 456 to 598 (LSRE…VDQP). The active-site For Fru-6P isomerization activity is K603.

It localises to the cytoplasm. The enzyme catalyses D-fructose 6-phosphate + L-glutamine = D-glucosamine 6-phosphate + L-glutamate. Functionally, involved in the production of the root hair deformation (HAD) factor specifically on medicago. The protein is Glutamine--fructose-6-phosphate aminotransferase [isomerizing] (nodM) of Rhizobium meliloti (strain 1021) (Ensifer meliloti).